Consider the following 300-residue polypeptide: Bifunctional protein FolD 2 (300 aa).

NADP(+)-binding positions include glycine 165–serine 167, serine 190, and isoleucine 231.

Belongs to the tetrahydrofolate dehydrogenase/cyclohydrolase family. In terms of assembly, homodimer.

The catalysed reaction is (6R)-5,10-methylene-5,6,7,8-tetrahydrofolate + NADP(+) = (6R)-5,10-methenyltetrahydrofolate + NADPH. It carries out the reaction (6R)-5,10-methenyltetrahydrofolate + H2O = (6R)-10-formyltetrahydrofolate + H(+). It functions in the pathway one-carbon metabolism; tetrahydrofolate interconversion. In terms of biological role, catalyzes the oxidation of 5,10-methylenetetrahydrofolate to 5,10-methenyltetrahydrofolate and then the hydrolysis of 5,10-methenyltetrahydrofolate to 10-formyltetrahydrofolate. This is Bifunctional protein FolD 2 from Pseudomonas syringae pv. syringae (strain B728a).